The following is a 173-amino-acid chain: Soluble secreted antigen MPT53 (173 aa).

The signal sequence occupies residues 1–38 (MSLRLVSPIKAFADGIVAVAIAVVLMFGLANTPRAVAA). Residues C73 and C76 are joined by a disulfide bond.

This sequence belongs to the thioredoxin family.

The protein localises to the secreted. Functionally, disulfide oxidoreductase that catalyzes the oxidation of reduced, unfolded secreted proteins to form disulfide bonds. Despite a weak homology to thioredoxin this cannot serve as a substrate for thioredoxin reductase. The protein is Soluble secreted antigen MPT53 (mpt53) of Mycobacterium bovis (strain ATCC BAA-935 / AF2122/97).